The sequence spans 106 residues: Ribosomal processing cysteine protease Prp (106 aa).

Catalysis depends on H22, which acts as the Proton donor. C34 serves as the catalytic Nucleophile.

This sequence belongs to the Prp family. In terms of assembly, homodimer. A mutant protein unable to cleave bL27 copurifies with its substrate.

Not inhibited by short peptide analogs; a 6-mer inhibits only 20% while a 13-mer inhibits 63%. Inhibited by Ac-KLNLQFF-CH(2) which binds covalantly to Cys-34. Inhibited by mersalyl acid (C13H18HgNO6). In terms of biological role, an essential cysteine protease that cleaves the N-terminal 9 amino acids from ribosomal protein bL27. Also acts as an N-terminal protease on the major capsid and scaffold assembly proteins of bacteriophage 80alpha. Cleavage of the N-terminus of bL27 (and thus this enzyme) is essential for growth; it cannot be replaced by a 'pre-cleaved' or non-cleavable form of bL27. Might serve a chaperone function during ribosome assembly. In Staphylococcus aureus (strain NCTC 8325 / PS 47), this protein is Ribosomal processing cysteine protease Prp.